The primary structure comprises 143 residues: Large ribosomal subunit protein uL15 (143 aa).

Residues 20–52 form a disordered region; the sequence is GRGIGSGKGKTAGRGHKGQHSRAGGYHKVGFEG. A compositionally biased stretch (basic residues) spans 30 to 39; sequence TAGRGHKGQH.

It belongs to the universal ribosomal protein uL15 family. Part of the 50S ribosomal subunit.

Binds to the 23S rRNA. The sequence is that of Large ribosomal subunit protein uL15 from Coxiella burnetii (strain CbuK_Q154) (Coxiella burnetii (strain Q154)).